Reading from the N-terminus, the 216-residue chain is Elongation factor Ts (216 aa).

Positions 81–84 (TDFV) are involved in Mg(2+) ion dislocation from EF-Tu.

The protein belongs to the EF-Ts family.

The protein resides in the cytoplasm. Its function is as follows. Associates with the EF-Tu.GDP complex and induces the exchange of GDP to GTP. It remains bound to the aminoacyl-tRNA.EF-Tu.GTP complex up to the GTP hydrolysis stage on the ribosome. The sequence is that of Elongation factor Ts from Geotalea daltonii (strain DSM 22248 / JCM 15807 / FRC-32) (Geobacter daltonii).